Here is a 460-residue protein sequence, read N- to C-terminus: U-box domain-containing protein 9 (460 aa).

In terms of domain architecture, U-box spans 73 to 147 (SCPEEFRCPL…SKWCKKNGLE (75 aa)). ARM repeat units lie at residues 201-244 (TEFR…NISI), 248-287 (SNKK…TLSA), and 289-328 (DSNK…TLCI).

In terms of assembly, binds to SD11, SD16, SD17, SD18, SD113, SD129 and SD25. Post-translationally, phosphorylated by SD1-6 and SD1-7.

The protein resides in the nucleus. It localises to the cell membrane. The catalysed reaction is S-ubiquitinyl-[E2 ubiquitin-conjugating enzyme]-L-cysteine + [acceptor protein]-L-lysine = [E2 ubiquitin-conjugating enzyme]-L-cysteine + N(6)-ubiquitinyl-[acceptor protein]-L-lysine.. It participates in protein modification; protein ubiquitination. In terms of biological role, functions as an E3 ubiquitin ligase. May be involved in the abscisic acid-mediated signaling pathway, at least during germination. The protein is U-box domain-containing protein 9 (PUB9) of Arabidopsis thaliana (Mouse-ear cress).